Reading from the N-terminus, the 140-residue chain is Large ribosomal subunit protein uL16 (140 aa).

Over residues 1 to 17 (MPLMPKRVKHRKMHRGS) the composition is skewed to basic residues. The interval 1-21 (MPLMPKRVKHRKMHRGSRSGN) is disordered.

It belongs to the universal ribosomal protein uL16 family. As to quaternary structure, part of the 50S ribosomal subunit.

Its function is as follows. Binds 23S rRNA and is also seen to make contacts with the A and possibly P site tRNAs. This chain is Large ribosomal subunit protein uL16, found in Akkermansia muciniphila (strain ATCC BAA-835 / DSM 22959 / JCM 33894 / BCRC 81048 / CCUG 64013 / CIP 107961 / Muc).